Reading from the N-terminus, the 462-residue chain is 3-ketoacyl CoA thiolase 1, peroxisomal (462 aa).

The N-terminal 34 residues, 1–34 (MEKAIQRQRVLLEHLQPIRHHTHDHSSSLTTSIC), are a transit peptide targeting the peroxisome. The active-site Acyl-thioester intermediate is Cys-138. Active-site proton acceptor residues include His-393 and Cys-425. Gly-427 provides a ligand contact to substrate.

Belongs to the thiolase-like superfamily. Thiolase family. As to quaternary structure, homodimer.

It is found in the peroxisome. It carries out the reaction an acyl-CoA + acetyl-CoA = a 3-oxoacyl-CoA + CoA. It participates in aromatic compound metabolism. It functions in the pathway lipid metabolism; fatty acid metabolism. Functionally, component of the floral volatile benzenoid/phenylpropanoid (FVBP) biosynthetic pathway. Thiolase that catalyzes the conversion of 3-oxo-3-phenylpropionyl-CoA (benzoylacetyl-CoA) to benzoyl-CoA. The chain is 3-ketoacyl CoA thiolase 1, peroxisomal from Petunia hybrida (Petunia).